Consider the following 216-residue polypeptide: Ras-related protein RabN1 (216 aa).

15-22 (GDYNSGKT) is a binding site for GTP. An Effector region motif is present at residues 37–44 (TCPSTFDL). GTP is bound by residues 62-66 (DTAGQ) and 128-131 (TKSD). Residue Cys216 is the site of S-geranylgeranyl cysteine attachment.

Belongs to the small GTPase superfamily. Rab family.

The protein localises to the cell membrane. This Dictyostelium discoideum (Social amoeba) protein is Ras-related protein RabN1 (rabN1).